The chain runs to 160 residues: Transcriptional repressor NrdR (160 aa).

A zinc finger lies at 3 to 34 (CPSCQNTDSRVLESRAADGGRSVRRRRECLNC). Residues 49-139 (ITVIKRNGNR…VYRQFRGIDD (91 aa)) enclose the ATP-cone domain.

It belongs to the NrdR family. Requires Zn(2+) as cofactor.

Negatively regulates transcription of bacterial ribonucleotide reductase nrd genes and operons by binding to NrdR-boxes. This is Transcriptional repressor NrdR from Synechococcus sp. (strain CC9605).